Here is a 376-residue protein sequence, read N- to C-terminus: Phosphate-binding protein (376 aa).

2 cysteine pairs are disulfide-bonded: C113/C158 and C306/C369.

In terms of assembly, heterooligomer with human PON1. Found in human plasma.

The protein localises to the secreted. Phosphate-binding protein. This is Phosphate-binding protein from Unknown prokaryotic organism.